Consider the following 405-residue polypeptide: L-rhamnonate dehydratase (405 aa).

Substrate contacts are provided by H33 and R59. The Mg(2+) site is built by D226, E252, and E280. Residue H329 is the Proton acceptor of the active site. Residue E349 participates in substrate binding.

It belongs to the mandelate racemase/muconate lactonizing enzyme family. RhamD subfamily. In terms of assembly, homooctamer; tetramer of dimers. Mg(2+) is required as a cofactor.

It catalyses the reaction L-rhamnonate = 2-dehydro-3-deoxy-L-rhamnonate + H2O. Catalyzes the dehydration of L-rhamnonate to 2-keto-3-deoxy-L-rhamnonate (KDR). The sequence is that of L-rhamnonate dehydratase from Escherichia coli (strain K12 / DH10B).